The primary structure comprises 316 residues: Glutathione synthetase (316 aa).

The 187-residue stretch at 124–310 (EKLFTAWFPE…ITGKLMDAIE (187 aa)) folds into the ATP-grasp domain. 150 to 207 (FREEHGDVILKPLDGMGGASIFRVKENDPNVSVIIETLTNHGQNYAMAQTFVPDISNG) lines the ATP pocket. Mg(2+) is bound by residues Glu-281 and Asn-283.

It belongs to the prokaryotic GSH synthase family. Requires Mg(2+) as cofactor. The cofactor is Mn(2+).

The catalysed reaction is gamma-L-glutamyl-L-cysteine + glycine + ATP = glutathione + ADP + phosphate + H(+). The protein operates within sulfur metabolism; glutathione biosynthesis; glutathione from L-cysteine and L-glutamate: step 2/2. This chain is Glutathione synthetase, found in Vibrio parahaemolyticus serotype O3:K6 (strain RIMD 2210633).